The following is a 217-amino-acid chain: Oxygen-insensitive NAD(P)H nitroreductase (217 aa).

10-14 contributes to the FMN binding site; it reads RYSTK. NAD(+) is bound by residues lysine 14, threonine 41, asparagine 71, lysine 74, and arginine 107. Residue asparagine 71 participates in FMN binding. FMN contacts are provided by residues 165 to 166 and 205 to 207; these read EG and KSR.

This sequence belongs to the nitroreductase family. In terms of assembly, homodimer. Requires FMN as cofactor.

Its function is as follows. Reduction of a variety of nitroaromatic compounds using NADH (and to lesser extent NADPH) as source of reducing equivalents; two electrons are transferred. Capable of reducing nitrofurazone. The polypeptide is Oxygen-insensitive NAD(P)H nitroreductase (Salmonella typhimurium (strain LT2 / SGSC1412 / ATCC 700720)).